The following is a 196-amino-acid chain: Histone H1.0-B (196 aa).

Disordered regions lie at residues 1 to 29 (MAEN…PKYS) and 86 to 196 (GVGA…GRKK). One can recognise an H15 domain in the interval 24-97 (DHPKYSDMIL…GASGSFRLAK (74 aa)). The span at 104 to 196 (PAKKPKKEIK…ASPKKSGRKK (93 aa)) shows a compositional bias: basic residues.

It belongs to the histone H1/H5 family.

The protein resides in the nucleus. It localises to the chromosome. Histones H1 are necessary for the condensation of nucleosome chains into higher-order structures. The histones H1.0 are found in cells that are in terminal stages of differentiation or that have low rates of cell division. In Xenopus laevis (African clawed frog), this protein is Histone H1.0-B (h1-0-b).